The primary structure comprises 167 residues: Putative ripening-related protein 6 (167 aa).

The signal sequence occupies residues 1 to 23 (MANAKQLALFAMLVLLLASCAAA). A disordered region spans residues 28 to 57 (KPDPCDGGGGGVDSHLPPGMRRCSSPAVSE).

The protein belongs to the kiwellin family.

It is found in the secreted. This is Putative ripening-related protein 6 from Oryza sativa subsp. japonica (Rice).